The chain runs to 341 residues: Zinc finger protein ZIC 4 (341 aa).

Residues 36 to 66 (HHGPQLAASSNPSVLPGLHEQPPQASHSRPL) form a disordered region. The C2H2-type 1; atypical zinc-finger motif lies at 135-169 (LICKWLGDDSPMSPRPCSKTFSTMHELVTHVTVEH). Residues 178–205 (HICFWEECPRQGKPFKAKYKLVNHIRVH) form a C2H2-type 2; atypical zinc finger. C2H2-type zinc fingers lie at residues 211–235 (FPCP…KRTH), 241–265 (FRCE…SHVH), and 271–295 (YMCK…MKVH). Residues 289-309 (RKHMKVHGRSPPPSSGYDSAI) are disordered.

Belongs to the GLI C2H2-type zinc-finger protein family. In terms of tissue distribution, exclusively expressed in the cerebellum.

It localises to the nucleus. Functionally, binds to DNA. The chain is Zinc finger protein ZIC 4 (Zic4) from Mus musculus (Mouse).